A 59-amino-acid chain; its full sequence is Large ribosomal subunit protein bL32 (59 aa).

The tract at residues 1 to 59 (MAVQQNKKSPSKRGMHRSHDFLTTAPIAVEPTTGEVHLRHHVSPNGYYRGRKVVKTKND) is disordered. Residues 49-59 (RGRKVVKTKND) are compositionally biased toward basic residues.

It belongs to the bacterial ribosomal protein bL32 family.

The chain is Large ribosomal subunit protein bL32 from Ralstonia pickettii (strain 12J).